The sequence spans 239 residues: RBPJ-interacting and tubulin-associated protein 1 (239 aa).

A Nuclear export signal motif is present at residues 12-24 (LDLSITGHSTALP). 2 disordered regions span residues 62–97 (APPS…TPRK) and 149–239 (LVQQ…PPWK). The Nuclear localization signal motif lies at 93-109 (GTPRKKIQYRVKSRTPS). Residues 129 to 158 (WVKKEDTVKIRPLLWSPSPRLVQQSSMQNA) are interaction with RBPJ/RBPSUH. Composition is skewed to polar residues over residues 149 to 159 (LVQQSSMQNAK) and 203 to 221 (RQRQ…SCSG). Residues 158–239 (AKQGPLRAVH…VKMQERPPWK (82 aa)) form an interaction with tubulin region.

Belongs to the RITA family. In terms of assembly, interacts with rbpj/rbpsuh.

Its subcellular location is the cytoplasm. The protein resides in the nucleus. In terms of biological role, tubulin-binding protein that acts as a negative regulator of Notch signaling pathway. Shuttles between the cytoplasm and the nucleus and mediates the nuclear export of rbpj/rbpsuh, thereby preventing the interaction between rbpj/rbpsuh and NICD product of Notch proteins (Notch intracellular domain), leading to down-regulate Notch-mediated transcription. May play a role in neurogenesis. The polypeptide is RBPJ-interacting and tubulin-associated protein 1 (rita1) (Xenopus laevis (African clawed frog)).